The following is a 285-amino-acid chain: MLRAYIFYRLVKNTLLTAFILSLILLTLQLTRLSNVLFGIPFKDFMGFLVVWNAYYTYFFIPEGVILSTFFLMKHFKDKKLLHVFYSFRISDFRIFLYCSIPFLTFFLISALLSNTLLEEKVAFTRKNMLFKLQEKFFSEVPAGTFVSFGAVVLHAEKREGNTLKEAFFKFGDITVLSEYLKYKGNGVFEFRRGTVITEEENYFVVKFNEYTLNLKQFQKKKLREKRLKESKVVNYVNVATLPLFFFLSFTVALKFCHGGLSYYAFASLFIVVHQLIIFVVKLML.

Transmembrane regions (helical) follow at residues 7–29 (FYRLVKNTLLTAFILSLILLTLQ), 49–71 (LVVWNAYYTYFFIPEGVILSTFF), 95–117 (IFLYCSIPFLTFFLISALLSNTL), 137–156 (FFSEVPAGTFVSFGAVVLHA), 232–254 (KVVNYVNVATLPLFFFLSFTVAL), and 259–281 (GGLSYYAFASLFIVVHQLIIFVV).

The protein resides in the cell membrane. This is an uncharacterized protein from Aquifex aeolicus (strain VF5).